Reading from the N-terminus, the 245-residue chain is NAD-dependent protein deacylase (245 aa).

Positions M1–H237 constitute a Deacetylase sirtuin-type domain. An NAD(+)-binding site is contributed by G13–W32. Substrate contacts are provided by Y57 and R60. Residue Q94 to D97 participates in NAD(+) binding. The Proton acceptor role is filled by H112. Residues C120 and C139 each contribute to the Zn(2+) site. NAD(+)-binding positions include G179–S181, N205–E207, and A223.

The protein belongs to the sirtuin family. Class III subfamily. Zn(2+) serves as cofactor.

The protein resides in the cytoplasm. It catalyses the reaction N(6)-acetyl-L-lysyl-[protein] + NAD(+) + H2O = 2''-O-acetyl-ADP-D-ribose + nicotinamide + L-lysyl-[protein]. It carries out the reaction N(6)-succinyl-L-lysyl-[protein] + NAD(+) + H2O = 2''-O-succinyl-ADP-D-ribose + nicotinamide + L-lysyl-[protein]. NAD-dependent lysine deacetylase and desuccinylase that specifically removes acetyl and succinyl groups on target proteins. Modulates the activities of several proteins which are inactive in their acylated form. In Vibrio vulnificus (strain YJ016), this protein is NAD-dependent protein deacylase.